An 84-amino-acid polypeptide reads, in one-letter code: Exendin-2-long (84 aa).

The signal sequence occupies residues 1–23 (MKSILWLCVFGLLIATLFPVSWQ). A propeptide spanning residues 24 to 44 (MAIKSRLSSEDSETDQRLFES) is cleaved from the precursor.

It belongs to the glucagon family. In terms of processing, an amidated Pro-81 is described. Such an amidation is however not compatible with the sequence displayed. Indeed cDNAs do not encode a Gly that could serve as substrate for peptide alpha-amidation. As to expression, expressed by the venom gland. Not expressed in the pancreas, liver, stomach, small intestine, lung, heart, kidney, spleen, ovary, and brain.

Its subcellular location is the secreted. Has vasoactive intestinal peptide(VIP)/secretin-like biological activity. Interacts with rat and human VIP receptors 1 (VIPR1) and 2 (VIPR2), with the highest affinity for the human VIPR2. Induces hypotension that is mediated by relaxation of cardiac smooth muscle. This vasodilation may not be transduced by VIP or PACAP receptors. In Heloderma suspectum (Gila monster), this protein is Exendin-2-long.